A 107-amino-acid chain; its full sequence is uncharacterized protein (107 aa).

Residues 88–97 (EEKKEKDKGK) show a composition bias toward basic and acidic residues. The segment at 88 to 107 (EEKKEKDKGKKGLLSRLKFW) is disordered. Basic residues predominate over residues 98 to 107 (KGLLSRLKFW).

This is an uncharacterized protein from Methanocaldococcus jannaschii (strain ATCC 43067 / DSM 2661 / JAL-1 / JCM 10045 / NBRC 100440) (Methanococcus jannaschii).